A 514-amino-acid chain; its full sequence is 2-isopropylmalate synthase (514 aa).

Positions valine 5–histidine 267 constitute a Pyruvate carboxyltransferase domain. Residues aspartate 14, histidine 202, histidine 204, and asparagine 238 each contribute to the Mn(2+) site. The interval lysine 392–valine 514 is regulatory domain.

This sequence belongs to the alpha-IPM synthase/homocitrate synthase family. LeuA type 1 subfamily. In terms of assembly, homodimer. It depends on Mn(2+) as a cofactor.

The protein localises to the cytoplasm. The catalysed reaction is 3-methyl-2-oxobutanoate + acetyl-CoA + H2O = (2S)-2-isopropylmalate + CoA + H(+). Its pathway is amino-acid biosynthesis; L-leucine biosynthesis; L-leucine from 3-methyl-2-oxobutanoate: step 1/4. Catalyzes the condensation of the acetyl group of acetyl-CoA with 3-methyl-2-oxobutanoate (2-ketoisovalerate) to form 3-carboxy-3-hydroxy-4-methylpentanoate (2-isopropylmalate). In Photobacterium profundum (strain SS9), this protein is 2-isopropylmalate synthase.